A 512-amino-acid polypeptide reads, in one-letter code: Differentially expressed in FDCP 8 homolog (512 aa).

The residue at position 1 (Met1) is an N-acetylmethionine. Positions 77 to 116 (NPFNKQSGPRQHEQGPGEEVPDVTPEEALPELPPGEPEFR) are disordered. A compositionally biased stretch (acidic residues) spans 95–105 (EVPDVTPEEAL). 2 consecutive Phorbol-ester/DAG-type zinc fingers follow at residues 199 to 250 (EHRF…SKPC) and 429 to 489 (IHTL…STTC). Ser501 bears the Phosphoserine mark.

The protein belongs to the DEF8 family. Interacts (via C-terminus) with PLEKHM1; this interaction is weak but increased in a RAB7A-dependent manner.

In terms of biological role, positively regulates lysosome peripheral distribution and ruffled border formation in osteoclasts. Involved in bone resorption. The polypeptide is Differentially expressed in FDCP 8 homolog (DEF8) (Homo sapiens (Human)).